Here is a 373-residue protein sequence, read N- to C-terminus: Alanine racemase (373 aa).

The active-site Proton acceptor; specific for D-alanine is the Lys40. An N6-(pyridoxal phosphate)lysine modification is found at Lys40. Arg140 contacts substrate. The Proton acceptor; specific for L-alanine role is filled by Tyr268. Residue Met315 participates in substrate binding.

The protein belongs to the alanine racemase family. It depends on pyridoxal 5'-phosphate as a cofactor.

It carries out the reaction L-alanine = D-alanine. It functions in the pathway amino-acid biosynthesis; D-alanine biosynthesis; D-alanine from L-alanine: step 1/1. In terms of biological role, catalyzes the interconversion of L-alanine and D-alanine. May also act on other amino acids. The protein is Alanine racemase (alr) of Limosilactobacillus fermentum (strain NBRC 3956 / LMG 18251) (Lactobacillus fermentum).